Consider the following 584-residue polypeptide: Putative poly(A) polymerase catalytic subunit (584 aa).

Residues 522-531 show a composition bias toward basic and acidic residues; sequence EAEISEKEET. Residues 522 to 584 are disordered; the sequence is EAEISEKEET…ENSLDSLTSD (63 aa). Over residues 546–569 the composition is skewed to low complexity; it reads SPNSSPNSSPNNSLNNSIDISTNN.

Belongs to the poxviridae poly(A) polymerase catalytic subunit family. Highly divergent.

The protein localises to the virion. It catalyses the reaction RNA(n) + ATP = RNA(n)-3'-adenine ribonucleotide + diphosphate. In terms of biological role, polymerase that creates the 3'-poly(A) tail of mRNA's. The polypeptide is Putative poly(A) polymerase catalytic subunit (Acanthamoeba polyphaga (Amoeba)).